The sequence spans 467 residues: Mothers against decapentaplegic homolog 2 (467 aa).

Serine 2 is modified (N-acetylserine). Threonine 8 carries the phosphothreonine modification. Residues proline 10–proline 176 enclose the MH1 domain. Residue lysine 19 is modified to N6-acetyllysine. 4 residues coordinate Zn(2+): cysteine 74, cysteine 149, cysteine 161, and histidine 166. Residues proline 207–isoleucine 217 are compositionally biased toward polar residues. The interval proline 207–proline 251 is disordered. Threonine 220 carries the phosphothreonine modification. Positions proline 221–tyrosine 225 match the PY-motif motif. A compositionally biased stretch (polar residues) spans serine 233–threonine 243. Residue serine 240 is modified to Phosphoserine; by CAMK2. Phosphoserine occurs at positions 245, 250, 255, 458, 460, and 464. Positions tryptophan 274 to serine 467 constitute an MH2 domain. A phosphoserine; by TGFBR1 mark is found at serine 465 and serine 467.

Belongs to the dwarfin/SMAD family. Monomer; in the absence of TGF-beta. Heterodimer; in the presence of TGF-beta. Forms a heterodimer with co-SMAD, SMAD4, in the nucleus to form the transactivation complex SMAD2/SMAD4. Found in a complex with SMAD3 and TRIM33 upon addition of TGF-beta. Identified in a complex that contains at least ZNF451, SMAD2, SMAD3 and SMAD4. Interacts (via the MH2 domain) with ZFYVE9; may form trimers with the SMAD4 co-SMAD. Interacts with TAZ/WWRT1. Interacts with FOXH1. Interacts with SNW1. Interacts with CREB-binding protein (CBP) and EP300. Interacts with SNON. Interacts with ALK4/ACVR1B. Interacts with SKOR1. Interacts with SKOR2. Interacts with PRDM16. Interacts (via MH2 domain) with LEMD3. Interacts with RBPMS. Interacts with WWP1. Interacts (dephosphorylated form, via the MH1 and MH2 domains) with RANBP3 (via its C-terminal R domain); the interaction results in the export of dephosphorylated SMAD3 out of the nucleus and termination of the TGF-beta signaling. Interacts with PDPK1 (via PH domain). Interacts with DAB2; the interactions are enhanced upon TGF-beta stimulation. Interacts with USP15. Interacts with PPP5C. Interacts with LDLRAD4 (via the SMAD interaction motif). Interacts (via MH2 domain) with PMEPA1 (via the SMAD interaction motif). Interacts with ZFHX3. Interacts with ZNF451. Interacts with SMURF2 when phosphorylated on Ser-465/467. Interacts with PPM1A. Interacts with TGF-beta. Interacts with TGFBR1. Interacts with TGIF. Interacts with SMAD3 and TRIM33. Interacts with ZNF580. Interacts with NEDD4L in response to TGF-beta. Interacts with HGS. Interacts with AIP1. Interacts with WWP1. Interacts with PML. Interacts weakly with ZNF8. Interacts (when phosphorylated) with RNF111; RNF111 acts as an enhancer of the transcriptional responses by mediating ubiquitination and degradation of SMAD2 inhibitors. Interacts with YAP1 (when phosphorylated at 'Ser-112'). Interacts when phosphorylated with IPO7; the interaction facilitates translocation of SMAD2 to the nucleus. Interacts with MTMR4; negatively regulates TGF-beta signaling through SMAD2 dephosphorylation and retention in endosomes. Post-translationally, in response to TGF-beta, phosphorylated on the C-terminal SXS motif by TGF-beta and activin type 1 receptor kinases, phosphorylation declines progressively in a KMT5A-dependent manner. Phosphorylation in this motif is required for interaction with a number of proteins including SMURF2, SNON and SMAD4 in response to TGF-beta. Dephosphorylated in this motif by PPM1A leading to disruption of the SMAD2/3-SMAD4 complex, nuclear export and termination of the TGF-beta signaling. In response to decorin, the naturally occurring inhibitor of TGF-beta signaling, phosphorylated on Ser-240 by CaMK2. Phosphorylated by MAPK3 upon EGF stimulation; which increases transcriptional activity and stability, and is blocked by calmodulin. Phosphorylated by PDPK1. In response to TGF-beta, ubiquitinated by NEDD4L; which promotes its degradation. Monoubiquitinated, leading to prevent DNA-binding. Deubiquitination by USP15 alleviates inhibition and promotes activation of TGF-beta target genes. Ubiquitinated by RNF111, leading to its degradation: only SMAD2 proteins that are 'in use' are targeted by RNF111, RNF111 playing a key role in activating SMAD2 and regulating its turnover. In terms of processing, acetylated on Lys-19 by coactivators in response to TGF-beta signaling, which increases transcriptional activity.

It localises to the cytoplasm. Its subcellular location is the nucleus. Receptor-regulated SMAD (R-SMAD) that is an intracellular signal transducer and transcriptional modulator activated by TGF-beta (transforming growth factor) and activin type 1 receptor kinases. Binds the TRE element in the promoter region of many genes that are regulated by TGF-beta and, on formation of the SMAD2/SMAD4 complex, activates transcription. Promotes TGFB1-mediated transcription of odontoblastic differentiation genes in dental papilla cells. Positively regulates PDPK1 kinase activity by stimulating its dissociation from the 14-3-3 protein YWHAQ which acts as a negative regulator. The sequence is that of Mothers against decapentaplegic homolog 2 (Smad2) from Mus musculus (Mouse).